We begin with the raw amino-acid sequence, 572 residues long: Urease subunit alpha (572 aa).

The Urease domain maps to 136 to 572; sequence GGIDTHIHFI…VPLGQRYFLF (437 aa). Histidine 141, histidine 143, and lysine 224 together coordinate Ni(2+). Position 224 is an N6-carboxylysine (lysine 224). Position 226 (histidine 226) interacts with substrate. Residues histidine 253 and histidine 279 each contribute to the Ni(2+) site. The active-site Proton donor is histidine 327. Aspartate 367 serves as a coordination point for Ni(2+).

Belongs to the metallo-dependent hydrolases superfamily. Urease alpha subunit family. As to quaternary structure, heterotrimer of UreA (gamma), UreB (beta) and UreC (alpha) subunits. Three heterotrimers associate to form the active enzyme. Ni cation serves as cofactor. Post-translationally, carboxylation allows a single lysine to coordinate two nickel ions.

It localises to the cytoplasm. The catalysed reaction is urea + 2 H2O + H(+) = hydrogencarbonate + 2 NH4(+). It functions in the pathway nitrogen metabolism; urea degradation; CO(2) and NH(3) from urea (urease route): step 1/1. The chain is Urease subunit alpha from Haemophilus influenzae (strain PittGG).